Consider the following 335-residue polypeptide: Probable peptide ABC transporter ATP-binding protein y4tR (335 aa).

Residues 15 to 264 (VRDLETHFYG…PTHPYTRALM (250 aa)) enclose the ABC transporter domain. 49-56 (GESGCGKS) is an ATP binding site.

The protein belongs to the ABC transporter superfamily.

It localises to the cell inner membrane. Functionally, probably part of a binding-protein-dependent transport system y4tOPQRS for a peptide. Probably responsible for energy coupling to the transport system. In Sinorhizobium fredii (strain NBRC 101917 / NGR234), this protein is Probable peptide ABC transporter ATP-binding protein y4tR.